Consider the following 394-residue polypeptide: Phosphoglycerate kinase (394 aa).

Residues 21 to 23 (DLN), arginine 37, 60 to 63 (HLGR), arginine 115, and arginine 148 contribute to the substrate site. Residues lysine 199, glutamate 321, and 347 to 350 (GGDT) each bind ATP.

Belongs to the phosphoglycerate kinase family. Monomer.

It localises to the cytoplasm. It carries out the reaction (2R)-3-phosphoglycerate + ATP = (2R)-3-phospho-glyceroyl phosphate + ADP. It functions in the pathway carbohydrate degradation; glycolysis; pyruvate from D-glyceraldehyde 3-phosphate: step 2/5. This Aromatoleum aromaticum (strain DSM 19018 / LMG 30748 / EbN1) (Azoarcus sp. (strain EbN1)) protein is Phosphoglycerate kinase.